A 609-amino-acid chain; its full sequence is Proline--tRNA ligase (609 aa).

It belongs to the class-II aminoacyl-tRNA synthetase family. ProS type 1 subfamily. In terms of assembly, homodimer.

The protein resides in the cytoplasm. The enzyme catalyses tRNA(Pro) + L-proline + ATP = L-prolyl-tRNA(Pro) + AMP + diphosphate. Its function is as follows. Catalyzes the attachment of proline to tRNA(Pro) in a two-step reaction: proline is first activated by ATP to form Pro-AMP and then transferred to the acceptor end of tRNA(Pro). As ProRS can inadvertently accommodate and process non-cognate amino acids such as alanine and cysteine, to avoid such errors it has two additional distinct editing activities against alanine. One activity is designated as 'pretransfer' editing and involves the tRNA(Pro)-independent hydrolysis of activated Ala-AMP. The other activity is designated 'posttransfer' editing and involves deacylation of mischarged Ala-tRNA(Pro). The misacylated Cys-tRNA(Pro) is not edited by ProRS. The chain is Proline--tRNA ligase from Synechococcus sp. (strain JA-3-3Ab) (Cyanobacteria bacterium Yellowstone A-Prime).